The primary structure comprises 1927 residues: Lactase/phlorizin hydrolase (1927 aa).

Residues M1–G19 form the signal peptide. The propeptide at S20–R868 is XBetaGly. Topologically, residues S20–T1882 are extracellular. N42 carries N-linked (GlcNAc...) asparagine glycosylation. The glycosyl hydrolase-1 1; Region I stretch occupies residues S44–C286. Residues I362–L855 are glycosyl hydrolase-1 2; Region II. Residues N368, N418, N512, N821, N934, N946, and N989 are each glycosylated (N-linked (GlcNAc...) asparagine). A glycosyl hydrolase-1 3; Region III. Phlorizin hydrolase/glycosylceramidase activity region spans residues T902–L1366. E1065 functions as the Proton donor; for phlorizin hydrolase/Glycosylceramidase activity in the catalytic mechanism. N1174 carries N-linked (GlcNAc...) asparagine glycosylation. Positions R1220 to A1244 are disordered. The segment covering Y1226–P1238 has biased composition (acidic residues). E1273 functions as the Nucleophile; for phlorizin hydrolase/Glycosylceramidase activity in the catalytic mechanism. Residues N1340 and N1508 are each glycosylated (N-linked (GlcNAc...) asparagine). Residues L1373 to G1846 form a glycosyl hydrolase-1 4; Region IV. Lactase activity region. Catalysis depends on E1538, which acts as the Proton donor; for lactase activity. The required for homodimerization and transport to the plasma membrane stretch occupies residues R1647–F1927. 2 N-linked (GlcNAc...) asparagine glycosylation sites follow: N1656 and N1672. The active-site Nucleophile; for lactase activity is E1749. N-linked (GlcNAc...) asparagine glycosylation is found at N1761 and N1814. The helical transmembrane segment at A1883 to L1901 threads the bilayer. Topologically, residues S1902–F1927 are cytoplasmic.

It belongs to the glycosyl hydrolase 1 family. In terms of assembly, homodimer. N-glycosylated. Specifically expressed in small intestine.

It localises to the apical cell membrane. The catalysed reaction is lactose + H2O = beta-D-galactose + D-glucose. It catalyses the reaction phlorizin + H2O = phloretin + beta-D-glucose. The enzyme catalyses D-cellobiose + H2O = beta-D-glucose + D-glucose. It carries out the reaction quercetin 4'-O-beta-D-glucoside + H2O = quercetin + beta-D-glucose. The catalysed reaction is quercetin 3-O-beta-D-glucoside + H2O = quercetin + beta-D-glucose. It catalyses the reaction kaempferol 3-O-beta-D-glucoside + H2O = kaempferol + beta-D-glucose. The enzyme catalyses luteolin 7-O-beta-D-glucoside + H2O = luteolin + beta-D-glucose. It carries out the reaction luteolin 4'-O-beta-D-glucoside + H2O = luteolin + beta-D-glucose. The catalysed reaction is (2S)-naringenin 7-O-beta-D-glucoside + H2O = (2S)-naringenin + beta-D-glucose. It catalyses the reaction eriodictyol-7-O-beta-D-glucoside + H2O = (S)-eriodictyol + beta-D-glucose. The enzyme catalyses apigenin 7-O-beta-D-glucoside + H2O = apigenin + beta-D-glucose. It carries out the reaction daidzein 7-O-beta-D-glucoside + H2O = daidzein + beta-D-glucose + H(+). The catalysed reaction is genistein 7-O-beta-D-glucoside + H2O = genistein + beta-D-glucose. It catalyses the reaction a beta-D-galactosyl-N-acylsphingosine + H2O = a ceramide + beta-D-galactose.. The enzyme catalyses beta-D-glucosyl-(1&lt;-&gt;1')-N-hexadecanoylsphing-4-enine + H2O = N-hexadecanoylsphing-4-enine + beta-D-glucose. It carries out the reaction beta-D-galactosyl-(1&lt;-&gt;1')-N-hexadecanoylsphing-4-enine + H2O = beta-D-galactose + N-hexadecanoylsphing-4-enine. The catalysed reaction is beta-D-galactosyl-(1&lt;-&gt;1')-N-hexadecanoylsphinganine + H2O = N-hexadecanoylsphinganine + beta-D-galactose. It catalyses the reaction beta-D-glucosyl-(1&lt;-&gt;1')-N-hexadecanoylsphinganine + H2O = N-hexadecanoylsphinganine + beta-D-glucose. In terms of biological role, broad specificity glycosidase of the intestinal brush border membrane that hydrolyzes lactose, the main sugar in mammalian milk, to produce D-glucose and D-galactose. The mature protein is composed of two domains that catalyze the hydrolysis of beta-glucopyranosides and beta-galactopyranosides, with a preference for hydrophilic aglycones (in lactose and cellobiose) for one domain and hydrophobic aglycones (in phlorizin and glycosylceramides) for the other. The chain is Lactase/phlorizin hydrolase from Homo sapiens (Human).